The sequence spans 349 residues: Arginine kinase (349 aa).

A Phosphagen kinase N-terminal domain is found at 3 to 85 (DLAELWEKVS…LGPVILDYHK (83 aa)). 58–62 (GVGVY) contributes to the substrate binding site. The 237-residue stretch at 113–349 (WIVSTRVRVG…EEIIKLEKAA (237 aa)) folds into the Phosphagen kinase C-terminal domain. ATP is bound by residues 116–120 (STRVR) and His179. Glu219 is a binding site for substrate. ATP is bound at residue Arg223. Cys265 is a substrate binding site. ATP is bound by residues 274–278 (RASVH) and 302–307 (RGIHGE). A substrate-binding site is contributed by Glu307.

Belongs to the ATP:guanido phosphotransferase family.

It catalyses the reaction L-arginine + ATP = N(omega)-phospho-L-arginine + ADP + H(+). This is Arginine kinase from Liolophura japonica (Chiton).